We begin with the raw amino-acid sequence, 441 residues long: tRNA (guanine(37)-N(1))-methyltransferase (441 aa).

The N-terminal 9 residues, 1–9 (MFAPPAARA), are a transit peptide targeting the mitochondrion. S-adenosyl-L-methionine-binding positions include arginine 221, 248–249 (DL), 276–277 (DG), and asparagine 331.

It belongs to the class I-like SAM-binding methyltransferase superfamily. TRM5/TYW2 family. In terms of assembly, monomer.

It localises to the mitochondrion matrix. The protein resides in the nucleus. The protein localises to the cytoplasm. It catalyses the reaction guanosine(37) in tRNA + S-adenosyl-L-methionine = N(1)-methylguanosine(37) in tRNA + S-adenosyl-L-homocysteine + H(+). Specifically methylates the N1 position of guanosine-37 in various cytoplasmic and mitochondrial tRNAs. Methylation is not dependent on the nature of the nucleoside 5' of the target nucleoside. This is the first step in the biosynthesis of wybutosine (yW), a modified base adjacent to the anticodon of tRNAs and required for accurate decoding. This is tRNA (guanine(37)-N(1))-methyltransferase from Phaeosphaeria nodorum (strain SN15 / ATCC MYA-4574 / FGSC 10173) (Glume blotch fungus).